We begin with the raw amino-acid sequence, 419 residues long: MTWGFLKQGIFRERSRVGKQKFYHCVSRYFHYLPPVLAILLPVGSWPFLSEQQWRYSYFLFPVVSSLGWLFAIGLRERQLRAAAGQLLETKIRKLTERDEGLKNIRETIEKRQKEANRLKLHNDKLVERLGQAREVVIQAKGRYDHMEEKSRKLHEENKQLQMQLEAAVRERNEKILENQELRQELKETLAYQQELHDEYQATFVEQHNMLDKRQAYIGNLEAKVQDLMCELRNLLQLEVGAKTELPGRPMASRDVVAQLVLEFRKIVFRVETTEAADSLTALRYTRTDPSAHNYSLACRQLFDDLREENLGMLFIYAPFAQRVLFANALFKDWTGHGLEDFLNKEGDVVLEGFAQWERDLLTESRTERSGKIVIKTKAFGATPFYYCVVTLDKGPLAEHVLGVLYPAKASFFTNLSYI.

The protein belongs to the UPF0242 family.

The sequence is that of UPF0242 protein TC_0906 from Chlamydia muridarum (strain MoPn / Nigg).